A 416-amino-acid chain; its full sequence is Adenylosuccinate synthetase (416 aa).

GTP is bound by residues 13–19 and 41–43; these read GDEGKGK and GHT. D14 serves as the catalytic Proton acceptor. Mg(2+)-binding residues include D14 and G41. IMP-binding positions include 14–17, 39–42, T126, R140, Q220, T235, and R299; these read DEGK and NAGH. The Proton donor role is filled by H42. A substrate-binding site is contributed by 295-301; that stretch reads VSTGRKR. Residues R301, 327 to 329, and 405 to 407 contribute to the GTP site; these read KLD and STS.

It belongs to the adenylosuccinate synthetase family. In terms of assembly, homodimer. It depends on Mg(2+) as a cofactor.

It localises to the cytoplasm. It catalyses the reaction IMP + L-aspartate + GTP = N(6)-(1,2-dicarboxyethyl)-AMP + GDP + phosphate + 2 H(+). It participates in purine metabolism; AMP biosynthesis via de novo pathway; AMP from IMP: step 1/2. Its function is as follows. Plays an important role in the de novo pathway of purine nucleotide biosynthesis. Catalyzes the first committed step in the biosynthesis of AMP from IMP. In Campylobacter jejuni subsp. jejuni serotype O:23/36 (strain 81-176), this protein is Adenylosuccinate synthetase.